A 394-amino-acid polypeptide reads, in one-letter code: Na(+)/H(+) antiporter NhaA (394 aa).

Transmembrane regions (helical) follow at residues 24–44 (AGLVLMACALAAIAVANSPLA), 58–78 (LSVQHWVNDGLMAVFFLLVGL), 96–116 (TLPGVAAVGGMAIPGIVYVML), 126–146 (GWAIPAATDIAFALGVMSLLG), 155–175 (IFLAALAIIDDLGAVIIIAIF), 180–200 (INVATLLGAVFVFGILRSLCA), 214–234 (AVLWVLLLVSGVHATLAGVLL), 267–287 (VAFAILPIFGFANAGVSFASI), 300–320 (VAAGLLIGKVVGIFGAVALMV), 336–356 (VLGVAFLCGIGFTMSLFIGLL), and 370–390 (GILAGSLLAGVLGYGILRIAG).

This sequence belongs to the NhaA Na(+)/H(+) (TC 2.A.33) antiporter family.

Its subcellular location is the cell inner membrane. It carries out the reaction Na(+)(in) + 2 H(+)(out) = Na(+)(out) + 2 H(+)(in). Na(+)/H(+) antiporter that extrudes sodium in exchange for external protons. This chain is Na(+)/H(+) antiporter NhaA, found in Azorhizobium caulinodans (strain ATCC 43989 / DSM 5975 / JCM 20966 / LMG 6465 / NBRC 14845 / NCIMB 13405 / ORS 571).